Reading from the N-terminus, the 250-residue chain is MSILGKIQRTQPLILNLANFLTPQRVADVISFIGASPLMTSEIAELESLVEISDAVVVNIGTISESTYPLFLEACRLANQKAKPLILDPVAVNVPFRASIVKRLSQEVKFNIIRGNSAEIAWFADKKSLNKGIDALESNIDNEHARLAAKKTGAVIIETGKVDIISKGHEEMYVDTDSPLFKINVGCGDMLTAVVGTFAAVSDDLFTAAYEATKFFGEAGMIATKQVQNLPGNFVNSLLDTLYQATQEIK.

Met39 contributes to the substrate binding site. ATP-binding residues include Arg114 and Thr159. Gly186 is a substrate binding site.

Belongs to the Thz kinase family. Mg(2+) is required as a cofactor.

The catalysed reaction is 5-(2-hydroxyethyl)-4-methylthiazole + ATP = 4-methyl-5-(2-phosphooxyethyl)-thiazole + ADP + H(+). It functions in the pathway cofactor biosynthesis; thiamine diphosphate biosynthesis; 4-methyl-5-(2-phosphoethyl)-thiazole from 5-(2-hydroxyethyl)-4-methylthiazole: step 1/1. Catalyzes the phosphorylation of the hydroxyl group of 4-methyl-5-beta-hydroxyethylthiazole (THZ). This is Hydroxyethylthiazole kinase from Lactococcus lactis subsp. cremoris (strain SK11).